We begin with the raw amino-acid sequence, 976 residues long: Vacuolar membrane protease (976 aa).

Residues 1–15 (MKLKSVFRSVLKYRK) lie on the Cytoplasmic side of the membrane. A helical transmembrane segment spans residues 16-36 (TNLSLLLLITYSIITLLYIFD). Over 37–359 (HERYKLNLPK…KFFVISAKTL (323 aa)) the chain is Vacuolar. Residues N96 and N121 are each glycosylated (N-linked (GlcNAc...) asparagine). Residues H156 and D168 each contribute to the Zn(2+) site. Residue N189 is glycosylated (N-linked (GlcNAc...) asparagine). E200 serves as the catalytic Proton acceptor. E201 lines the Zn(2+) pocket. A glycan (N-linked (GlcNAc...) asparagine) is linked at N217. E226 and H300 together coordinate Zn(2+). Residues 360–380 (FYWNCIFLLVSPVVAIGLYLI) traverse the membrane as a helical segment. Topologically, residues 381-392 (SRDRMTWKSYSW) are cytoplasmic. A helical transmembrane segment spans residues 393 to 412 (LSWTRFPLSLAAGIIVQKLF). Topologically, residues 413 to 428 (SNDIIRSNPLTFSRNY) are vacuolar. Residues 429–449 (FWPISAFFTQVIFTSYVLINC) traverse the membrane as a helical segment. At 450–461 (SNFFFPCADMKS) the chain is on the cytoplasmic side. The chain crosses the membrane as a helical span at residues 462 to 482 (LSIIELFIILWTILLFTSKLL). The Vacuolar segment spans residues 483 to 496 (YSSDYRYTGLYPLS). Residues 497-517 (IFFLLSTIAAILRLLALALGM) traverse the membrane as a helical segment. Residues 518-627 (RTRKRLGREC…NSLKLEYTDY (110 aa)) lie on the Cytoplasmic side of the membrane. A disordered region spans residues 528 to 610 (RDHHSNYSSH…PLLKGSNSME (83 aa)). A compositionally biased stretch (polar residues) spans 549 to 558 (NLEQPQDQLT). Residues 559 to 570 (SSQDDQASIQDD) are compositionally biased toward low complexity. A compositionally biased stretch (basic and acidic residues) spans 582-601 (NVDEDHGMDSSSQQHDERVP). A helical membrane pass occupies residues 628–648 (AWIIQFLLIVPIPSFILFNSV). Topologically, residues 649-668 (DVIMDALNHTVQEGSKATFD) are vacuolar. The N-linked (GlcNAc...) asparagine glycan is linked to N656. Residues 669–689 (VLRFGMVGSILIALPILPFFY) form a helical membrane-spanning segment. Over 690-692 (KVN) the chain is Cytoplasmic. Residues 693 to 713 (YITISLTALLFLISASKTLLV) traverse the membrane as a helical segment. Over 714–976 (HPFTNSNPLK…LVIVKDAIIL (263 aa)) the chain is Vacuolar. N768, N796, N811, N866, and N937 each carry an N-linked (GlcNAc...) asparagine glycan.

It belongs to the peptidase M28 family. Requires Zn(2+) as cofactor. In terms of processing, N-glycosylated.

It is found in the vacuole membrane. Functionally, may be involved in vacuolar sorting and osmoregulation. The sequence is that of Vacuolar membrane protease from Saccharomyces cerevisiae (strain ATCC 204508 / S288c) (Baker's yeast).